Reading from the N-terminus, the 334-residue chain is tRNA N6-adenosine threonylcarbamoyltransferase (334 aa).

Positions 112 and 116 each coordinate Fe cation. Substrate is bound by residues 135–139 (VVSGG), Asp-168, Gly-181, Asp-185, and Asn-274. Residue Asp-303 coordinates Fe cation.

Belongs to the KAE1 / TsaD family. Fe(2+) serves as cofactor.

Its subcellular location is the cytoplasm. The enzyme catalyses L-threonylcarbamoyladenylate + adenosine(37) in tRNA = N(6)-L-threonylcarbamoyladenosine(37) in tRNA + AMP + H(+). Its function is as follows. Required for the formation of a threonylcarbamoyl group on adenosine at position 37 (t(6)A37) in tRNAs that read codons beginning with adenine. Is involved in the transfer of the threonylcarbamoyl moiety of threonylcarbamoyl-AMP (TC-AMP) to the N6 group of A37, together with TsaE and TsaB. TsaD likely plays a direct catalytic role in this reaction. This chain is tRNA N6-adenosine threonylcarbamoyltransferase, found in Anaeromyxobacter dehalogenans (strain 2CP-C).